The following is a 314-amino-acid chain: Dihydroorotate dehydrogenase (fumarate) (314 aa).

Residues Lys-46, 70 to 74 (NSMGL), and Asn-130 each bind substrate. Residue Lys-46 forms a Glycyl lysine isopeptide (Lys-Gly) (interchain with G-Cter in ubiquitin) linkage. 46–47 (KS) lines the FMN pocket. An FMN-binding site is contributed by Asn-130. Catalysis depends on Cys-133, which acts as the Nucleophile. FMN-binding residues include Lys-167 and Ile-195. Residue 196-197 (NS) coordinates substrate. FMN-binding positions include Gly-224, 252–253 (GG), and 274–275 (GT).

It belongs to the dihydroorotate dehydrogenase family. Type 1 subfamily. Homodimer. FMN is required as a cofactor.

The protein resides in the cytoplasm. It catalyses the reaction (S)-dihydroorotate + fumarate = orotate + succinate. The protein operates within pyrimidine metabolism; UMP biosynthesis via de novo pathway. With respect to regulation, the activity is independent of the presence of oxygen. Functionally, catalyzes the conversion of dihydroorotate to orotate with fumarate as the electron acceptor. Molecular oxygen can replace fumarate in vitro. Does not use oxaloacetate or NAD or NADP as electron acceptors. This is Dihydroorotate dehydrogenase (fumarate) (URA1) from Saccharomyces cerevisiae (strain ATCC 204508 / S288c) (Baker's yeast).